Consider the following 85-residue polypeptide: Putative plasmid stability protein y4jJ (85 aa).

Residues 66–78 (EAEHFNQLRDKTP) are compositionally biased toward basic and acidic residues. Residues 66 to 85 (EAEHFNQLRDKTPAEPMSFE) form a disordered region.

This sequence to P.syringae pv tomato plasmid stability protein StbC.

In terms of biological role, involved in plasmid stability. This is Putative plasmid stability protein y4jJ from Sinorhizobium fredii (strain NBRC 101917 / NGR234).